A 294-amino-acid polypeptide reads, in one-letter code: Dof zinc finger protein DOF4.1 (294 aa).

A Dof-type zinc finger spans residues 68–122 (RNCPRCNSSNTKFCYYNNYSLAQPRYLCKSCRRYWTEGGSLRNVPVGGGSRKNKK). Zn(2+) is bound by residues Cys70, Cys73, Cys95, and Cys98. Disordered regions lie at residues 109-178 (RNVP…DKRA) and 247-294 (MYPY…GPTW). Composition is skewed to polar residues over residues 126 to 136 (PNSSTSSSTKN) and 157 to 173 (KTHQ…SSPM). Residues 251–273 (GDHEDRQQHHHVRHDDGNKKREG) show a composition bias toward basic and acidic residues. Positions 284–294 (ILGGDSGGPTW) are enriched in gly residues.

It localises to the nucleus. In terms of biological role, transcription factor that binds specifically to a 5'-AA[AG]G-3' consensus core sequence. In Arabidopsis thaliana (Mouse-ear cress), this protein is Dof zinc finger protein DOF4.1 (DOF4.1).